A 157-amino-acid chain; its full sequence is Cyclic pyranopterin monophosphate synthase (157 aa).

Substrate-binding positions include 74–76 and 112–113; these read MCH and ME. Residue Asp-127 is part of the active site.

It belongs to the MoaC family. Homohexamer; trimer of dimers.

It carries out the reaction (8S)-3',8-cyclo-7,8-dihydroguanosine 5'-triphosphate = cyclic pyranopterin phosphate + diphosphate. It participates in cofactor biosynthesis; molybdopterin biosynthesis. Its function is as follows. Catalyzes the conversion of (8S)-3',8-cyclo-7,8-dihydroguanosine 5'-triphosphate to cyclic pyranopterin monophosphate (cPMP). This is Cyclic pyranopterin monophosphate synthase from Campylobacter jejuni subsp. jejuni serotype O:6 (strain 81116 / NCTC 11828).